Consider the following 198-residue polypeptide: ADP-ribosylation factor-like protein 3 (198 aa).

Position 1 is an N-acetylmethionine (Met-1). 24–31 (GLDNAGKT) contacts GTP. Lys-50 is covalently cross-linked (Glycyl lysine isopeptide (Lys-Gly) (interchain with G-Cter in ubiquitin)). GTP-binding positions include 74–78 (DVGGQ) and 133–136 (NKQD).

The protein belongs to the small GTPase superfamily. Arf family. In terms of assembly, interacts with SYS1 and SLO1.

It is found in the golgi apparatus. Functionally, involved in the targeting of ARL1 to the Golgi. Can bind and hydrolyze GTP. This is ADP-ribosylation factor-like protein 3 (ARL3) from Saccharomyces cerevisiae (strain ATCC 204508 / S288c) (Baker's yeast).